We begin with the raw amino-acid sequence, 478 residues long: MLO-like protein 13 (478 aa).

Over 1 to 10 the chain is Extracellular; the sequence is MAEARSGSLE. A helical transmembrane segment spans residues 11-31; sequence YTPTWVVAFICFIIVLLSLLA. At 32–60 the chain is on the cytoplasmic side; it reads ERGLHHLGKCLKRRQQDALFEALQKLKEE. The helical transmembrane segment at 61–81 threads the bilayer; the sequence is LMLLGFISLMLTVSQAAIRHI. At 82 to 145 the chain is on the extracellular side; sequence CVPPALVNNM…VSVEALHQLH (64 aa). The helical transmembrane segment at 146–166 threads the bilayer; that stretch reads IFIFVLAVFHVIFCASTMVLG. At 167–276 the chain is on the cytoplasmic side; it reads GARIQQWKHW…LRTLEIDFKK (110 aa). 2 consecutive transmembrane segments (helical) span residues 277–297 and 298–318; these read VVSISWYLWLFVVVFLLLNVG and GWNTYFWLSFLPLILLLMVGA. The Cytoplasmic portion of the chain corresponds to 319 to 360; the sequence is KLEYIISSLALDVSEKRSRAEEAVITPSDELFWFHRPGIVLQ. The chain crosses the membrane as a helical span at residues 361 to 381; that stretch reads LIHFILFQNSFEIAFFFWILF. Residues 382 to 400 are Extracellular-facing; sequence TYGIHSCIMEKLGYLIPRL. The helical transmembrane segment at 401–421 threads the bilayer; the sequence is VMGVLVQVLCSYSTLPLYALV. The Cytoplasmic portion of the chain corresponds to 422–478; that stretch reads TQMGSKFKKGIFDNVVQSTLEGWLEDTRNRGESTSEAHRIEMQPTTPESYNVQSENP. The tract at residues 435-456 is calmodulin-binding; that stretch reads NVVQSTLEGWLEDTRNRGESTS. Basic and acidic residues predominate over residues 449–462; the sequence is RNRGESTSEAHRIE. The segment at 449–478 is disordered; that stretch reads RNRGESTSEAHRIEMQPTTPESYNVQSENP. Polar residues predominate over residues 464–478; it reads QPTTPESYNVQSENP.

This sequence belongs to the MLO family.

The protein resides in the membrane. Functionally, may be involved in modulation of pathogen defense and leaf cell death. Activity seems to be regulated by Ca(2+)-dependent calmodulin binding and seems not to require heterotrimeric G proteins. In Arabidopsis thaliana (Mouse-ear cress), this protein is MLO-like protein 13 (MLO13).